Here is a 55-residue protein sequence, read N- to C-terminus: ATP synthase F(0) complex subunit 8 (55 aa).

The chain crosses the membrane as a helical span at residues 7-29 (NPWFYIMLMSWLTFSLIIQPELL).

It belongs to the ATPase protein 8 family. Component of the ATP synthase complex composed at least of ATP5F1A/subunit alpha, ATP5F1B/subunit beta, ATP5MC1/subunit c (homooctomer), MT-ATP6/subunit a, MT-ATP8/subunit 8, ATP5ME/subunit e, ATP5MF/subunit f, ATP5MG/subunit g, ATP5MK/subunit k, ATP5MJ/subunit j, ATP5F1C/subunit gamma, ATP5F1D/subunit delta, ATP5F1E/subunit epsilon, ATP5PF/subunit F6, ATP5PB/subunit b, ATP5PD/subunit d, ATP5PO/subunit OSCP. ATP synthase complex consists of a soluble F(1) head domain (subunits alpha(3) and beta(3)) - the catalytic core - and a membrane F(0) domain - the membrane proton channel (subunits c, a, 8, e, f, g, k and j). These two domains are linked by a central stalk (subunits gamma, delta, and epsilon) rotating inside the F1 region and a stationary peripheral stalk (subunits F6, b, d, and OSCP).

It localises to the mitochondrion membrane. In terms of biological role, subunit 8, of the mitochondrial membrane ATP synthase complex (F(1)F(0) ATP synthase or Complex V) that produces ATP from ADP in the presence of a proton gradient across the membrane which is generated by electron transport complexes of the respiratory chain. ATP synthase complex consist of a soluble F(1) head domain - the catalytic core - and a membrane F(1) domain - the membrane proton channel. These two domains are linked by a central stalk rotating inside the F(1) region and a stationary peripheral stalk. During catalysis, ATP synthesis in the catalytic domain of F(1) is coupled via a rotary mechanism of the central stalk subunits to proton translocation. In vivo, can only synthesize ATP although its ATP hydrolase activity can be activated artificially in vitro. Part of the complex F(0) domain. The protein is ATP synthase F(0) complex subunit 8 of Musophaga violacea (Violet turaco).